Here is a 192-residue protein sequence, read N- to C-terminus: Ribosome hibernation promotion factor (192 aa).

A disordered region spans residues 95-129 (RVNRKHKTHGEPEAFVAEVQEAPPENVDDVNAEPT). Residues 120-129 (NVDDVNAEPT) show a composition bias toward acidic residues.

Belongs to the HPF/YfiA ribosome-associated protein family. Long HPF subfamily. Interacts with 100S ribosomes.

The protein resides in the cytoplasm. Its function is as follows. Required for dimerization of active 70S ribosomes into 100S ribosomes in stationary phase; 100S ribosomes are translationally inactive and sometimes present during exponential growth. The polypeptide is Ribosome hibernation promotion factor (Staphylococcus haemolyticus (strain JCSC1435)).